Reading from the N-terminus, the 542-residue chain is CTP synthase (542 aa).

Positions 1–265 (MTRYIFVTGG…DDFVVERFGL (265 aa)) are amidoligase domain. S13 serves as a coordination point for CTP. S13 is a binding site for UTP. Residues 14–19 (SLGKGI) and D71 contribute to the ATP site. The Mg(2+) site is built by D71 and E139. Residues 146–148 (DIE), 186–191 (KTKPTQ), and K222 each bind CTP. UTP-binding positions include 186-191 (KTKPTQ) and K222. Residues 290 to 541 (TIAMVGKYME…VKAALAQKNK (252 aa)) form the Glutamine amidotransferase type-1 domain. G351 contributes to the L-glutamine binding site. Residue C378 is the Nucleophile; for glutamine hydrolysis of the active site. L-glutamine-binding positions include 379–382 (LGMQ), E402, and R469. Catalysis depends on residues H514 and E516.

It belongs to the CTP synthase family. As to quaternary structure, homotetramer.

It catalyses the reaction UTP + L-glutamine + ATP + H2O = CTP + L-glutamate + ADP + phosphate + 2 H(+). The enzyme catalyses L-glutamine + H2O = L-glutamate + NH4(+). The catalysed reaction is UTP + NH4(+) + ATP = CTP + ADP + phosphate + 2 H(+). It functions in the pathway pyrimidine metabolism; CTP biosynthesis via de novo pathway; CTP from UDP: step 2/2. Allosterically activated by GTP, when glutamine is the substrate; GTP has no effect on the reaction when ammonia is the substrate. The allosteric effector GTP functions by stabilizing the protein conformation that binds the tetrahedral intermediate(s) formed during glutamine hydrolysis. Inhibited by the product CTP, via allosteric rather than competitive inhibition. In terms of biological role, catalyzes the ATP-dependent amination of UTP to CTP with either L-glutamine or ammonia as the source of nitrogen. Regulates intracellular CTP levels through interactions with the four ribonucleotide triphosphates. This chain is CTP synthase, found in Pseudomonas entomophila (strain L48).